Here is a 365-residue protein sequence, read N- to C-terminus: tRNA N6-adenosine threonylcarbamoyltransferase (365 aa).

Residues His-119 and His-123 each coordinate Fe cation. Residues 141 to 145, Asp-174, Gly-187, and Asn-288 each bind substrate; that span reads LVSGG. Asp-316 provides a ligand contact to Fe cation.

It belongs to the KAE1 / TsaD family. It depends on Fe(2+) as a cofactor.

The protein localises to the cytoplasm. It catalyses the reaction L-threonylcarbamoyladenylate + adenosine(37) in tRNA = N(6)-L-threonylcarbamoyladenosine(37) in tRNA + AMP + H(+). Its function is as follows. Required for the formation of a threonylcarbamoyl group on adenosine at position 37 (t(6)A37) in tRNAs that read codons beginning with adenine. Is involved in the transfer of the threonylcarbamoyl moiety of threonylcarbamoyl-AMP (TC-AMP) to the N6 group of A37, together with TsaE and TsaB. TsaD likely plays a direct catalytic role in this reaction. This Rhizobium johnstonii (strain DSM 114642 / LMG 32736 / 3841) (Rhizobium leguminosarum bv. viciae) protein is tRNA N6-adenosine threonylcarbamoyltransferase.